The primary structure comprises 157 residues: Cyclic pyranopterin monophosphate synthase (157 aa).

Substrate is bound by residues methionine 74 to histidine 76 and methionine 112 to glutamate 113. The active site involves aspartate 127.

Belongs to the MoaC family. Homohexamer; trimer of dimers.

It carries out the reaction (8S)-3',8-cyclo-7,8-dihydroguanosine 5'-triphosphate = cyclic pyranopterin phosphate + diphosphate. The protein operates within cofactor biosynthesis; molybdopterin biosynthesis. In terms of biological role, catalyzes the conversion of (8S)-3',8-cyclo-7,8-dihydroguanosine 5'-triphosphate to cyclic pyranopterin monophosphate (cPMP). The polypeptide is Cyclic pyranopterin monophosphate synthase (Campylobacter jejuni subsp. jejuni serotype O:2 (strain ATCC 700819 / NCTC 11168)).